The primary structure comprises 176 residues: MSLWKDIKGTILPFWVTLRYLFRRPVTVCYPERKQTPAPRYRGRLVLTRDPDGEERCVACHLCSAACPVDCISMQAAEREDGRRYAAWFRINFSRCIFCGLCTEACPTLALQMTSEYELATRELLQVIYEKDELLIDGCGKNAEYNFYRRAGIGVVAPRGANPGESSPEDVKSNLP.

2 4Fe-4S ferredoxin-type domains span residues 47-77 (LTRD…MQAA) and 87-116 (AWFR…MTSE). [4Fe-4S] cluster contacts are provided by cysteine 57, cysteine 60, cysteine 63, cysteine 67, cysteine 96, cysteine 99, cysteine 102, and cysteine 106.

It belongs to the complex I 23 kDa subunit family. In terms of assembly, NDH-1 is composed of 14 different subunits. Subunits NuoA, H, J, K, L, M, N constitute the membrane sector of the complex. It depends on [4Fe-4S] cluster as a cofactor.

Its subcellular location is the cell inner membrane. It carries out the reaction a quinone + NADH + 5 H(+)(in) = a quinol + NAD(+) + 4 H(+)(out). NDH-1 shuttles electrons from NADH, via FMN and iron-sulfur (Fe-S) centers, to quinones in the respiratory chain. The immediate electron acceptor for the enzyme in this species is believed to be ubiquinone. Couples the redox reaction to proton translocation (for every two electrons transferred, four hydrogen ions are translocated across the cytoplasmic membrane), and thus conserves the redox energy in a proton gradient. In Syntrophotalea carbinolica (strain DSM 2380 / NBRC 103641 / GraBd1) (Pelobacter carbinolicus), this protein is NADH-quinone oxidoreductase subunit I.